A 670-amino-acid polypeptide reads, in one-letter code: Putative segment polarity protein dishevelled homolog DVL1P1 (670 aa).

One can recognise a DIX domain in the interval 1-85 (MAETKIIYHM…RVVSWLVLVE (85 aa)). The segment at 89–240 (SDAGSQGTDS…ADRASSFSSM (152 aa)) is disordered. The span at 142-151 (SHRRDRARRR) shows a compositional bias: basic residues. A compositionally biased stretch (basic and acidic residues) spans 152-171 (NREEAARTNGHPRGDRRRDV). Low complexity-rich tracts occupy residues 176-192 (DSAS…SSFV) and 201-214 (SRLS…TSSR). Over residues 215–228 (LIRKHKRRRRKQRL) the composition is skewed to basic residues. Residues 251-323 (TVTLNMERHH…NDDAVRVLRE (73 aa)) enclose the PDZ domain. The region spanning 400 to 474 (PDSGLEIRDR…SEQCYYVFGD (75 aa)) is the DEP domain. The tract at residues 518 to 642 (PGPPPCFPPA…PGGPPVRELA (125 aa)) is disordered. 2 stretches are compositionally biased toward low complexity: residues 526–553 (PAYQ…SSGS) and 600–614 (SRGS…SYAP).

This sequence belongs to the DSH family. As to expression, expressed in thymus, heart, liver, kidney, brain, skeletal muscle, and pancreas.

It is found in the cytoplasm. Functionally, may play a role in the signal transduction pathway mediated by multiple Wnt genes. This is Putative segment polarity protein dishevelled homolog DVL1P1 (DVL1P1) from Homo sapiens (Human).